We begin with the raw amino-acid sequence, 99 residues long: Protein Tat (99 aa).

The interaction with human CREBBP stretch occupies residues Met-1–Asn-24. The transactivation stretch occupies residues Met-1–Gly-48. Cys-22, Cys-25, and Cys-27 together coordinate Zn(2+). Residues Cys-22 to Cys-37 are cysteine-rich. Lys-28 carries the post-translational modification N6-acetyllysine; by host PCAF. 4 residues coordinate Zn(2+): Cys-30, His-33, Cys-34, and Cys-37. The interval Phe-38–Gly-48 is core. A compositionally biased stretch (basic residues) spans Gly-48–Thr-58. Positions Gly-48–Pro-99 are disordered. A Nuclear localization signal, RNA-binding (TAR), and protein transduction motif is present at residues Arg-49 to Arg-57. An interaction with the host capping enzyme RNGTT region spans residues Arg-49–Glu-86. An N6-acetyllysine; by host EP300 and GCN5L2 mark is found at Lys-50 and Lys-51. Arg-52 carries the asymmetric dimethylarginine; by host PRMT6 modification. The segment covering Ala-60–Ser-75 has biased composition (polar residues). A Glycyl lysine isopeptide (Lys-Gly) (interchain with G-Cter in ubiquitin) cross-link involves residue Lys-71. Basic and acidic residues predominate over residues Thr-77–Pro-99.

Belongs to the lentiviruses Tat family. In terms of assembly, interacts with host CCNT1. Associates with the P-TEFb complex composed at least of Tat, P-TEFb (CDK9 and CCNT1), TAR RNA, RNA Pol II. Recruits the HATs CREBBP, TAF1/TFIID, EP300, PCAF and GCN5L2. Interacts with host KAT5/Tip60; this interaction targets the latter to degradation. Interacts with the host deacetylase SIRT1. Interacts with host capping enzyme RNGTT; this interaction stimulates RNGTT. Binds to host KDR, and to the host integrins ITGAV/ITGB3 and ITGA5/ITGB1. Interacts with host KPNB1/importin beta-1 without previous binding to KPNA1/importin alpha-1. Interacts with EIF2AK2. Interacts with host nucleosome assembly protein NAP1L1; this interaction may be required for the transport of Tat within the nucleus, since the two proteins interact at the nuclear rim. Interacts with host C1QBP/SF2P32; this interaction involves lysine-acetylated Tat. Interacts with the host chemokine receptors CCR2, CCR3 and CXCR4. Interacts with host DPP4/CD26; this interaction may trigger an anti-proliferative effect. Interacts with host LDLR. Interacts with the host extracellular matrix metalloproteinase MMP1. Interacts with host PRMT6; this interaction mediates Tat's methylation. Interacts with, and is ubiquitinated by MDM2/Hdm2. Interacts with host PSMC3 and HTATIP2. Interacts with STAB1; this interaction may overcome SATB1-mediated repression of IL2 and IL2RA (interleukin) in T cells by binding to the same domain than HDAC1. Interacts (when acetylated) with human CDK13, thereby increasing HIV-1 mRNA splicing and promoting the production of the doubly spliced HIV-1 protein Nef. Interacts with host TBP; this interaction modulates the activity of transcriptional pre-initiation complex. Interacts with host RELA. Interacts with host PLSCR1; this interaction negatively regulates Tat transactivation activity by altering its subcellular distribution. Asymmetrical arginine methylation by host PRMT6 seems to diminish the transactivation capacity of Tat and affects the interaction with host CCNT1. In terms of processing, acetylation by EP300, CREBBP, GCN5L2/GCN5 and PCAF regulates the transactivation activity of Tat. EP300-mediated acetylation of Lys-50 promotes dissociation of Tat from the TAR RNA through the competitive binding to PCAF's bromodomain. In addition, the non-acetylated Tat's N-terminus can also interact with PCAF. PCAF-mediated acetylation of Lys-28 enhances Tat's binding to CCNT1. Lys-50 is deacetylated by SIRT1. Post-translationally, polyubiquitination by host MDM2 does not target Tat to degradation, but activates its transactivation function and fosters interaction with CCNT1 and TAR RNA. Phosphorylated by EIF2AK2 on serine and threonine residues adjacent to the basic region important for TAR RNA binding and function. Phosphorylation of Tat by EIF2AK2 is dependent on the prior activation of EIF2AK2 by dsRNA.

Its subcellular location is the host nucleus. The protein localises to the host nucleolus. The protein resides in the host cytoplasm. It localises to the secreted. Transcriptional activator that increases RNA Pol II processivity, thereby increasing the level of full-length viral transcripts. Recognizes a hairpin structure at the 5'-LTR of the nascent viral mRNAs referred to as the transactivation responsive RNA element (TAR) and recruits the cyclin T1-CDK9 complex (P-TEFb complex) that will in turn hyperphosphorylate the RNA polymerase II to allow efficient elongation. The CDK9 component of P-TEFb and other Tat-activated kinases hyperphosphorylate the C-terminus of RNA Pol II that becomes stabilized and much more processive. Other factors such as HTATSF1/Tat-SF1, SUPT5H/SPT5, and HTATIP2 are also important for Tat's function. Besides its effect on RNA Pol II processivity, Tat induces chromatin remodeling of proviral genes by recruiting the histone acetyltransferases (HATs) CREBBP, EP300 and PCAF to the chromatin. This also contributes to the increase in proviral transcription rate, especially when the provirus integrates in transcriptionally silent region of the host genome. To ensure maximal activation of the LTR, Tat mediates nuclear translocation of NF-kappa-B by interacting with host RELA. Through its interaction with host TBP, Tat may also modulate transcription initiation. Tat can reactivate a latently infected cell by penetrating in it and transactivating its LTR promoter. In the cytoplasm, Tat is thought to act as a translational activator of HIV-1 mRNAs. Its function is as follows. Extracellular circulating Tat can be endocytosed by surrounding uninfected cells via the binding to several surface receptors such as CD26, CXCR4, heparan sulfate proteoglycans (HSPG) or LDLR. Neurons are rarely infected, but they internalize Tat via their LDLR. Through its interaction with nuclear HATs, Tat is potentially able to control the acetylation-dependent cellular gene expression. Modulates the expression of many cellular genes involved in cell survival, proliferation or in coding for cytokines or cytokine receptors. Tat plays a role in T-cell and neurons apoptosis. Tat induced neurotoxicity and apoptosis probably contribute to neuroAIDS. Circulating Tat also acts as a chemokine-like and/or growth factor-like molecule that binds to specific receptors on the surface of the cells, affecting many cellular pathways. In the vascular system, Tat binds to ITGAV/ITGB3 and ITGA5/ITGB1 integrins dimers at the surface of endothelial cells and competes with bFGF for heparin-binding sites, leading to an excess of soluble bFGF. This chain is Protein Tat, found in Homo sapiens (Human).